A 356-amino-acid polypeptide reads, in one-letter code: S-adenosylmethionine:tRNA ribosyltransferase-isomerase (356 aa).

It belongs to the QueA family. Monomer.

It localises to the cytoplasm. The enzyme catalyses 7-aminomethyl-7-carbaguanosine(34) in tRNA + S-adenosyl-L-methionine = epoxyqueuosine(34) in tRNA + adenine + L-methionine + 2 H(+). It functions in the pathway tRNA modification; tRNA-queuosine biosynthesis. Transfers and isomerizes the ribose moiety from AdoMet to the 7-aminomethyl group of 7-deazaguanine (preQ1-tRNA) to give epoxyqueuosine (oQ-tRNA). This Shigella boydii serotype 4 (strain Sb227) protein is S-adenosylmethionine:tRNA ribosyltransferase-isomerase.